The sequence spans 591 residues: Aspartate--tRNA(Asp/Asn) ligase (591 aa).

Position 176 (E176) interacts with L-aspartate. The segment at 200–203 (QLFK) is aspartate. An L-aspartate-binding site is contributed by R222. ATP is bound by residues 222-224 (RDE) and Q231. H450 is an L-aspartate binding site. An ATP-binding site is contributed by E484. L-aspartate is bound at residue R491. 536-539 (GLDR) is an ATP binding site.

Belongs to the class-II aminoacyl-tRNA synthetase family. Type 1 subfamily. As to quaternary structure, homodimer.

It localises to the cytoplasm. It catalyses the reaction tRNA(Asx) + L-aspartate + ATP = L-aspartyl-tRNA(Asx) + AMP + diphosphate. Functionally, aspartyl-tRNA synthetase with relaxed tRNA specificity since it is able to aspartylate not only its cognate tRNA(Asp) but also tRNA(Asn). Reaction proceeds in two steps: L-aspartate is first activated by ATP to form Asp-AMP and then transferred to the acceptor end of tRNA(Asp/Asn). This chain is Aspartate--tRNA(Asp/Asn) ligase, found in Bacillus cereus (strain B4264).